The chain runs to 296 residues: 4-hydroxy-tetrahydrodipicolinate synthase (296 aa).

Residue threonine 49 coordinates pyruvate. The active-site Proton donor/acceptor is tyrosine 137. The Schiff-base intermediate with substrate role is filled by lysine 166. A pyruvate-binding site is contributed by isoleucine 208.

It belongs to the DapA family. In terms of assembly, homotetramer; dimer of dimers.

It localises to the cytoplasm. It catalyses the reaction L-aspartate 4-semialdehyde + pyruvate = (2S,4S)-4-hydroxy-2,3,4,5-tetrahydrodipicolinate + H2O + H(+). It functions in the pathway amino-acid biosynthesis; L-lysine biosynthesis via DAP pathway; (S)-tetrahydrodipicolinate from L-aspartate: step 3/4. Its function is as follows. Catalyzes the condensation of (S)-aspartate-beta-semialdehyde [(S)-ASA] and pyruvate to 4-hydroxy-tetrahydrodipicolinate (HTPA). In Pelodictyon phaeoclathratiforme (strain DSM 5477 / BU-1), this protein is 4-hydroxy-tetrahydrodipicolinate synthase.